The chain runs to 325 residues: 5-dehydro-2-deoxygluconokinase (325 aa).

Belongs to the carbohydrate kinase PfkB family.

It carries out the reaction 5-dehydro-2-deoxy-D-gluconate + ATP = 6-phospho-5-dehydro-2-deoxy-D-gluconate + ADP + H(+). It functions in the pathway polyol metabolism; myo-inositol degradation into acetyl-CoA; acetyl-CoA from myo-inositol: step 5/7. Catalyzes the phosphorylation of 5-dehydro-2-deoxy-D-gluconate (2-deoxy-5-keto-D-gluconate or DKG) to 6-phospho-5-dehydro-2-deoxy-D-gluconate (DKGP). In Bacillus licheniformis (strain ATCC 14580 / DSM 13 / JCM 2505 / CCUG 7422 / NBRC 12200 / NCIMB 9375 / NCTC 10341 / NRRL NRS-1264 / Gibson 46), this protein is 5-dehydro-2-deoxygluconokinase.